The chain runs to 621 residues: Chaperone protein HscA homolog (621 aa).

This sequence belongs to the heat shock protein 70 family.

In terms of biological role, chaperone involved in the maturation of iron-sulfur cluster-containing proteins. Has a low intrinsic ATPase activity which is markedly stimulated by HscB. This Cupriavidus taiwanensis (strain DSM 17343 / BCRC 17206 / CCUG 44338 / CIP 107171 / LMG 19424 / R1) (Ralstonia taiwanensis (strain LMG 19424)) protein is Chaperone protein HscA homolog.